The sequence spans 473 residues: Ribulose bisphosphate carboxylase large chain 3 (473 aa).

Positions 116 and 166 each coordinate substrate. The Proton acceptor role is filled by Lys-168. Lys-170 contributes to the substrate binding site. Lys-194, Asp-196, and Glu-197 together coordinate Mg(2+). At Lys-194 the chain carries N6-carboxylysine. His-287 (proton acceptor) is an active-site residue. Residues Arg-288, His-320, and Ser-372 each coordinate substrate.

The protein belongs to the RuBisCO large chain family. Type I subfamily. In terms of assembly, heterohexadecamer of 8 large chains and 8 small chains. The cofactor is Mg(2+).

It carries out the reaction 2 (2R)-3-phosphoglycerate + 2 H(+) = D-ribulose 1,5-bisphosphate + CO2 + H2O. The catalysed reaction is D-ribulose 1,5-bisphosphate + O2 = 2-phosphoglycolate + (2R)-3-phosphoglycerate + 2 H(+). RuBisCO catalyzes two reactions: the carboxylation of D-ribulose 1,5-bisphosphate, the primary event in carbon dioxide fixation, as well as the oxidative fragmentation of the pentose substrate. Both reactions occur simultaneously and in competition at the same active site. The chain is Ribulose bisphosphate carboxylase large chain 3 from Nitrobacter hamburgensis (strain DSM 10229 / NCIMB 13809 / X14).